A 295-amino-acid polypeptide reads, in one-letter code: 4-hydroxy-tetrahydrodipicolinate synthase (295 aa).

Thr-46 contributes to the pyruvate binding site. Tyr-134 serves as the catalytic Proton donor/acceptor. Lys-162 functions as the Schiff-base intermediate with substrate in the catalytic mechanism. Ile-205 is a binding site for pyruvate.

This sequence belongs to the DapA family. In terms of assembly, homotetramer; dimer of dimers.

It is found in the cytoplasm. It catalyses the reaction L-aspartate 4-semialdehyde + pyruvate = (2S,4S)-4-hydroxy-2,3,4,5-tetrahydrodipicolinate + H2O + H(+). It functions in the pathway amino-acid biosynthesis; L-lysine biosynthesis via DAP pathway; (S)-tetrahydrodipicolinate from L-aspartate: step 3/4. Its function is as follows. Catalyzes the condensation of (S)-aspartate-beta-semialdehyde [(S)-ASA] and pyruvate to 4-hydroxy-tetrahydrodipicolinate (HTPA). The polypeptide is 4-hydroxy-tetrahydrodipicolinate synthase (Anaeromyxobacter sp. (strain Fw109-5)).